Reading from the N-terminus, the 474-residue chain is PRAME family member 8 (474 aa).

One copy of the LRR 1; degenerate repeat lies at 97–122 (QSKLQVLDLRNVDENFCDIFSGATAS). Residues 177-201 (HVCCKELQVFGMPIHSIIEVLNMVE) form an LRR 2; degenerate repeat. The LRR 3; degenerate repeat unit spans residues 202-228 (LDCIQEVEVCCPWELSTLVKFAPYLGQ). One copy of the LRR 4; degenerate repeat lies at 229 to 264 (MRNLRKLVLFNIRASACIPPDNKGQFIARFTSQFLK). LRR repeat units follow at residues 265–290 (LDYF…LRCL), 291–322 (QASL…RQLK), 323–341 (ELDL…PLTG), 347–374 (VATL…VLSR), and 375–399 (CSQL…LLRH).

This sequence belongs to the PRAME family.

This chain is PRAME family member 8, found in Homo sapiens (Human).